The sequence spans 1375 residues: uncharacterized protein (1375 aa).

The Helicase ATP-binding domain maps to Leu-277 to Ser-476. An ATP-binding site is contributed by Asp-290–Thr-297. The RING-type zinc-finger motif lies at Cys-1092–Lys-1130. The 147-residue stretch at Thr-1190–Pro-1336 folds into the Helicase C-terminal domain.

It belongs to the SNF2/RAD54 helicase family.

It localises to the nucleus. This is an uncharacterized protein from Schizosaccharomyces pombe (strain 972 / ATCC 24843) (Fission yeast).